We begin with the raw amino-acid sequence, 260 residues long: 5-oxoprolinase subunit A (260 aa).

This sequence belongs to the LamB/PxpA family. As to quaternary structure, forms a complex composed of PxpA, PxpB and PxpC.

The catalysed reaction is 5-oxo-L-proline + ATP + 2 H2O = L-glutamate + ADP + phosphate + H(+). Its function is as follows. Catalyzes the cleavage of 5-oxoproline to form L-glutamate coupled to the hydrolysis of ATP to ADP and inorganic phosphate. The chain is 5-oxoprolinase subunit A from Methylococcus capsulatus (strain ATCC 33009 / NCIMB 11132 / Bath).